We begin with the raw amino-acid sequence, 262 residues long: 27 kDa lipoprotein antigen (262 aa).

Residues 1-28 (MSASCAVPRLTRFAVFAVAGATALSLSA) form the signal peptide. Low complexity-rich tracts occupy residues 28 to 57 (ACGSSNKSSSTSTSTSTSTSTVTSAAPSST) and 148 to 158 (STPGGASSTPP). 2 disordered regions span residues 28–60 (ACGSSNKSSSTSTSTSTSTSTVTSAAPSSTPNA) and 138–171 (VNGTCPKPHESTPGGASSTPPSGSPSPAPAKPAW). Residue cysteine 29 is the site of N-palmitoyl cysteine attachment. Cysteine 29 is lipidated: S-diacylglycerol cysteine.

It is found in the cell membrane. In Mycobacterium intracellulare, this protein is 27 kDa lipoprotein antigen (Mi43).